The chain runs to 270 residues: Transmembrane protein 176B (270 aa).

Helical transmembrane passes span 65 to 85 (LALG…GVCL), 95 to 115 (ASGC…GAIV), 127 to 147 (VSSL…VLCV), and 209 to 229 (LFLA…GVGL). Phosphoserine is present on residues Ser236, Ser245, Ser254, and Ser258. Residues 237 to 270 (SQPLNEEGSEKRLLGENSVPPSPSREQTSTAIVL) are disordered. Residues 260-270 (SREQTSTAIVL) show a composition bias toward polar residues.

It belongs to the TMEM176 family.

It localises to the nucleus membrane. Its function is as follows. May play a role in the process of maturation of dendritic cells. Required for the development of cerebellar granule cells. This is Transmembrane protein 176B (TMEM176B) from Pongo abelii (Sumatran orangutan).